We begin with the raw amino-acid sequence, 164 residues long: Protein SprT (164 aa).

In terms of domain architecture, SprT-like spans 14–156; that stretch reads QQAETFFKRT…LCRRCREPLV (143 aa). H69 is a Zn(2+) binding site. E70 is an active-site residue. H73 is a Zn(2+) binding site.

The protein belongs to the SprT family. It depends on Zn(2+) as a cofactor.

The protein localises to the cytoplasm. In Pseudomonas savastanoi pv. phaseolicola (strain 1448A / Race 6) (Pseudomonas syringae pv. phaseolicola (strain 1448A / Race 6)), this protein is Protein SprT.